The following is a 210-amino-acid chain: Chloramphenicol acetyltransferase (210 aa).

The active site involves histidine 79.

It belongs to the transferase hexapeptide repeat family.

The catalysed reaction is chloramphenicol + acetyl-CoA = chloramphenicol 3-acetate + CoA. In terms of biological role, this enzyme is an effector of chloramphenicol resistance in bacteria. In Morganella morganii (Proteus morganii), this protein is Chloramphenicol acetyltransferase (cat).